The sequence spans 149 residues: Large ribosomal subunit protein uL15 (149 aa).

The tract at residues 1-54 is disordered; sequence MSLKLHNLKPTPNSRPEKHRKGRGHAAGKGKQAGKGQSGQNKRKGHRLGFEGGQ. Basic residues predominate over residues 17 to 28; it reads EKHRKGRGHAAG.

Belongs to the universal ribosomal protein uL15 family. Part of the 50S ribosomal subunit.

Its function is as follows. Binds to the 23S rRNA. The polypeptide is Large ribosomal subunit protein uL15 (Mycoplasmopsis synoviae (strain 53) (Mycoplasma synoviae)).